Reading from the N-terminus, the 326-residue chain is Polycomb complex protein BMI-1 (326 aa).

The RING-type zinc-finger motif lies at 18 to 57; sequence CVLCGGYFIDATTIIECLHSFCKTCIVRYLETSKYCPICD. The short motif at 81–95 is the Nuclear localization signal element; the sequence is KLVPGLFKNEMKRRR. Residues 162 to 182 are interaction with PHC2; it reads RYLRCPAAMTVMHLRKFLRSK. Residues 164 to 228 form an interaction with E4F1 region; that stretch reads LRCPAAMTVM…GPLPLKYRVR (65 aa). The interval 236-326 is disordered; it reads ISHQRDGLTN…VNGSSATSSG (91 aa). Composition is skewed to low complexity over residues 266–278, 290–303, and 315–326; these read PSTS…PSTP, SSTM…PSGN, and SSVNGSSATSSG.

Component of a PRC1-like complex. Identified in a PRC1-like HPRC-H complex with CBX2, CBX4, CBX8, PHC1, PHC2, PHC3 RING1 and RNF2. Interacts with RNF2/RING2. Interacts with RING1. Part of a complex that contains RNF2, UB2D3 and BMI1, where RNF2 and BMI1 form a tight heterodimer, and UB2D3 interacts only with RNF2. The complex composed of RNF2, UB2D3 and BMI1 binds nucleosomes, and has activity only with nucleosomal histone H2A. Interacts with CBX7 and CBX8. Interacts with SPOP. Part of a complex consisting of BMI1, CUL3 and SPOP. Interacts with E4F1. Interacts with PHC2. Interacts with zinc finger protein ZNF277. May be part of a complex including at least ZNF277, BMI1 and RNF2/RING2. In terms of processing, may be polyubiquitinated; which does not lead to proteasomal degradation. Monoubiquitinated.

The protein localises to the nucleus. It is found in the cytoplasm. Component of a Polycomb group (PcG) multiprotein PRC1-like complex, a complex class required to maintain the transcriptionally repressive state of many genes, including Hox genes, throughout development. PcG PRC1 complex acts via chromatin remodeling and modification of histones; it mediates monoubiquitination of histone H2A 'Lys-119', rendering chromatin heritably changed in its expressibility. The complex composed of RNF2, UB2D3 and BMI1 binds nucleosomes, and has activity only with nucleosomal histone H2A. In the PRC1-like complex, regulates the E3 ubiquitin-protein ligase activity of RNF2/RING2. The sequence is that of Polycomb complex protein BMI-1 (BMI1) from Bos taurus (Bovine).